A 935-amino-acid polypeptide reads, in one-letter code: Protein translocase subunit SecA (935 aa).

ATP-binding positions include Gln-90, 108–112 (GEGKT), and Asp-504. The segment at 543–568 (GGRRPQGFGTSKKKGKNWSPSDADIF) is disordered.

This sequence belongs to the SecA family. Monomer and homodimer. Part of the essential Sec protein translocation apparatus which comprises SecA, SecYEG and auxiliary proteins SecDF. Other proteins may also be involved.

It is found in the cell inner membrane. The protein resides in the cellular thylakoid membrane. Its subcellular location is the cytoplasm. It catalyses the reaction ATP + H2O + cellular proteinSide 1 = ADP + phosphate + cellular proteinSide 2.. Its function is as follows. Part of the Sec protein translocase complex. Interacts with the SecYEG preprotein conducting channel. Has a central role in coupling the hydrolysis of ATP to the transfer of proteins into and across the cell membrane, serving as an ATP-driven molecular motor driving the stepwise translocation of polypeptide chains across the membrane. In terms of biological role, probably participates in protein translocation into and across both the cytoplasmic and thylakoid membranes in cyanobacterial cells. The polypeptide is Protein translocase subunit SecA (Rippkaea orientalis (strain PCC 8801 / RF-1) (Cyanothece sp. (strain PCC 8801))).